The primary structure comprises 217 residues: Thiopurine S-methyltransferase (217 aa).

Residues Trp-11, Leu-46, Glu-67, and Arg-122 each coordinate S-adenosyl-L-methionine.

It belongs to the class I-like SAM-binding methyltransferase superfamily. TPMT family.

It localises to the cytoplasm. It catalyses the reaction S-adenosyl-L-methionine + a thiopurine = S-adenosyl-L-homocysteine + a thiopurine S-methylether.. The protein is Thiopurine S-methyltransferase of Vibrio atlanticus (strain LGP32) (Vibrio splendidus (strain Mel32)).